A 625-amino-acid chain; its full sequence is Probable potassium transport system protein Kup 1 (625 aa).

The next 12 membrane-spanning stretches (helical) occupy residues 14–34 (LSLL…TSPL), 50–70 (AAAV…ITTV), 104–124 (IVAL…ITPA), 139–159 (PALQ…LFAI), 170–190 (LFGP…LVGI), 213–233 (GATG…AEAL), 249–269 (WFAV…ALVI), 287–307 (LLLP…QSVI), 339–359 (IYVG…TIGF), 368–388 (AYGI…FIAM), 396–416 (LLAA…FFLA), and 421–441 (IAEG…LMWI).

The protein belongs to the HAK/KUP transporter (TC 2.A.72) family.

It is found in the cell inner membrane. It catalyses the reaction K(+)(in) + H(+)(in) = K(+)(out) + H(+)(out). Functionally, transport of potassium into the cell. Likely operates as a K(+):H(+) symporter. This Bradyrhizobium sp. (strain ORS 278) protein is Probable potassium transport system protein Kup 1.